The following is a 413-amino-acid chain: Imidazolonepropionase (413 aa).

Fe(3+)-binding residues include histidine 70 and histidine 72. Zn(2+) contacts are provided by histidine 70 and histidine 72. Residues arginine 79, tyrosine 142, and histidine 175 each contribute to the 4-imidazolone-5-propanoate site. Tyrosine 142 is an N-formimidoyl-L-glutamate binding site. Residue histidine 240 participates in Fe(3+) binding. Histidine 240 is a Zn(2+) binding site. Glutamate 243 lines the 4-imidazolone-5-propanoate pocket. Position 315 (aspartate 315) interacts with Fe(3+). Aspartate 315 contributes to the Zn(2+) binding site. N-formimidoyl-L-glutamate contacts are provided by asparagine 317 and glycine 319. Serine 320 contacts 4-imidazolone-5-propanoate.

This sequence belongs to the metallo-dependent hydrolases superfamily. HutI family. The cofactor is Zn(2+). Fe(3+) serves as cofactor.

Its subcellular location is the cytoplasm. It catalyses the reaction 4-imidazolone-5-propanoate + H2O = N-formimidoyl-L-glutamate. It participates in amino-acid degradation; L-histidine degradation into L-glutamate; N-formimidoyl-L-glutamate from L-histidine: step 3/3. Its function is as follows. Catalyzes the hydrolytic cleavage of the carbon-nitrogen bond in imidazolone-5-propanoate to yield N-formimidoyl-L-glutamate. It is the third step in the universal histidine degradation pathway. In Treponema denticola (strain ATCC 35405 / DSM 14222 / CIP 103919 / JCM 8153 / KCTC 15104), this protein is Imidazolonepropionase.